Reading from the N-terminus, the 422-residue chain is Dihydroorotase (422 aa).

Zn(2+) contacts are provided by H57 and H59. Residues 59–61 (HLR) and N91 each bind substrate. The Zn(2+) site is built by D149, H176, and H229. N275 provides a ligand contact to substrate. D302 contributes to the Zn(2+) binding site. The active site involves D302. Substrate-binding positions include H306 and 320 to 321 (FG).

It belongs to the metallo-dependent hydrolases superfamily. DHOase family. Class I DHOase subfamily. Zn(2+) is required as a cofactor.

It catalyses the reaction (S)-dihydroorotate + H2O = N-carbamoyl-L-aspartate + H(+). The protein operates within pyrimidine metabolism; UMP biosynthesis via de novo pathway; (S)-dihydroorotate from bicarbonate: step 3/3. Its function is as follows. Catalyzes the reversible cyclization of carbamoyl aspartate to dihydroorotate. This chain is Dihydroorotase, found in Endomicrobium trichonymphae.